Reading from the N-terminus, the 1079-residue chain is DNA annealing helicase and endonuclease ZRANB3 (1079 aa).

The 163-residue stretch at 46–208 (IFALKRNGRC…FMQIEALFPQ (163 aa)) folds into the Helicase ATP-binding domain. Residues 46–481 (IFALKRNGRC…GRKEKIQAEE (436 aa)) form a DNA annealing helicase activity region. 59 to 66 (DEMGLGKT) provides a ligand contact to ATP. Positions 157 to 160 (DESH) match the DEAH box motif. Positions 325-481 (AVKDYIKMML…GRKEKIQAEE (157 aa)) constitute a Helicase C-terminal domain. The PIP-box signature appears at 519 to 526 (QHDIRSFF). Phosphoserine is present on S569. The segment at 582–601 (ASEDHCSPSEETPSQSKQIR) is disordered. Over residues 590 to 600 (SEETPSQSKQI) the composition is skewed to polar residues. The RanBP2-type zinc finger occupies 621–650 (PVEGWQCSLCTYINNSELPYCEMCETPQGS). Residue C630 is modified to (Microbial infection) S-methylcysteine. The tract at residues 689-725 (LAQSEPGQLADSKEETPKIEKEDGLTSQPGNEQWKSS) is disordered. The span at 699–712 (DSKEETPKIEKEDG) shows a compositional bias: basic and acidic residues. A compositionally biased stretch (polar residues) spans 713–725 (LTSQPGNEQWKSS). Residues 1011–1051 (PGEGHFWQVDHIKPVYGGGGQCSLDNLQTLCTVCHKERTAR) enclose the HNH domain. An endonuclease activity region spans residues 1011–1079 (PGEGHFWQVD…SDITRFLVKK (69 aa)). The short motif at 1074 to 1078 (RFLVK) is the APIM motif element.

Belongs to the SNF2/RAD54 helicase family. Interacts (via PIP-box and RanBP2-type zinc finger) with PCNA (when PCNA is polyubiquitinated via 'Lys-63'-linked polyubiquitin). (Microbial infection) Methylation at Cys-630 by enteropathogenic E.coli protein NleE or S.flexneri protein OspZ: methylation disrupts ability to bind 'Lys-63'-linked ubiquitin.

The protein localises to the nucleus. Its subcellular location is the chromosome. Functionally, DNA annealing helicase and endonuclease required to maintain genome stability at stalled or collapsed replication forks by facilitating fork restart and limiting inappropriate recombination that could occur during template switching events. Recruited to the sites of stalled DNA replication by polyubiquitinated PCNA and acts as a structure-specific endonuclease that cleaves the replication fork D-loop intermediate, generating an accessible 3'-OH group in the template of the leading strand, which is amenable to extension by DNA polymerase. In addition to endonuclease activity, also catalyzes the fork regression via annealing helicase activity in order to prevent disintegration of the replication fork and the formation of double-strand breaks. This is DNA annealing helicase and endonuclease ZRANB3 from Homo sapiens (Human).